The sequence spans 34 residues: Photosystem II reaction center protein Psb30 (34 aa).

Residues 6–26 (VIGQLLSATLIVLAGPAVIFV) form a helical membrane-spanning segment.

It belongs to the Psb30/Ycf12 family. PSII is composed of 1 copy each of membrane proteins PsbA, PsbB, PsbC, PsbD, PsbE, PsbF, PsbH, PsbI, PsbJ, PsbK, PsbL, PsbM, PsbT, PsbX, PsbY, PsbZ, Psb30/Ycf12, peripheral proteins of the oxygen-evolving complex and a large number of cofactors. It forms dimeric complexes.

It localises to the plastid. The protein resides in the chloroplast thylakoid membrane. Its function is as follows. A core subunit of photosystem II (PSII), probably helps stabilize the reaction center. This chain is Photosystem II reaction center protein Psb30, found in Heterosigma akashiwo (strain NIES-293 / 8280G21-1).